We begin with the raw amino-acid sequence, 157 residues long: Small ribosomal subunit protein uS9 (157 aa).

The protein belongs to the universal ribosomal protein uS9 family.

The sequence is that of Small ribosomal subunit protein uS9 from Caulobacter sp. (strain K31).